Here is a 221-residue protein sequence, read N- to C-terminus: DNA mismatch repair protein MutH (221 aa).

This sequence belongs to the MutH family.

Its subcellular location is the cytoplasm. Its function is as follows. Sequence-specific endonuclease that cleaves unmethylated GATC sequences. It is involved in DNA mismatch repair. This Vibrio cholerae serotype O1 (strain ATCC 39541 / Classical Ogawa 395 / O395) protein is DNA mismatch repair protein MutH.